The sequence spans 393 residues: CCA-adding enzyme (393 aa).

Residues glycine 27 and arginine 30 each contribute to the ATP site. The CTP site is built by glycine 27 and arginine 30. Mg(2+)-binding residues include aspartate 40 and aspartate 42. Residues arginine 111, aspartate 154, arginine 157, arginine 160, and arginine 163 each coordinate ATP. 5 residues coordinate CTP: arginine 111, aspartate 154, arginine 157, arginine 160, and arginine 163.

The protein belongs to the tRNA nucleotidyltransferase/poly(A) polymerase family. Bacterial CCA-adding enzyme type 3 subfamily. Homodimer. The cofactor is Mg(2+).

The enzyme catalyses a tRNA precursor + 2 CTP + ATP = a tRNA with a 3' CCA end + 3 diphosphate. The catalysed reaction is a tRNA with a 3' CCA end + 2 CTP + ATP = a tRNA with a 3' CCACCA end + 3 diphosphate. In terms of biological role, catalyzes the addition and repair of the essential 3'-terminal CCA sequence in tRNAs without using a nucleic acid template. Adds these three nucleotides in the order of C, C, and A to the tRNA nucleotide-73, using CTP and ATP as substrates and producing inorganic pyrophosphate. tRNA 3'-terminal CCA addition is required both for tRNA processing and repair. Also involved in tRNA surveillance by mediating tandem CCA addition to generate a CCACCA at the 3' terminus of unstable tRNAs. While stable tRNAs receive only 3'-terminal CCA, unstable tRNAs are marked with CCACCA and rapidly degraded. In Listeria monocytogenes serotype 4b (strain F2365), this protein is CCA-adding enzyme.